A 46-amino-acid polypeptide reads, in one-letter code: Pape peptide (46 aa).

Residues 1–10 (KQLLKEALAP) are compositionally biased toward low complexity. Residues 1-46 (KQLLKEALAPEPAPKPAPEPAPEPAPEPAPEAAPEPAAAAPEAAPE) are disordered. Positions 11 to 33 (EPAPKPAPEPAPEPAPEPAPEAA) are enriched in pro residues. 4 PAPE repeats span residues 16–19 (PAPE), 20–23 (PAPE), 24–27 (PAPE), and 28–31 (PAPE). Residues 34–46 (PEPAAAAPEAAPE) are compositionally biased toward low complexity.

Expressed by the venom gland.

The protein localises to the secreted. The protein is Pape peptide of Tityus stigmurus (Brazilian scorpion).